Consider the following 139-residue polypeptide: Transcription initiation factor IIA small chain homolog (139 aa).

The disordered stretch occupies residues 113–139; that stretch reads LSAQGPSKRVNRAHAAAAGDDEDDDSD.

Belongs to the TFIIA subunit 2 family.

It is found in the nucleus. This is Transcription initiation factor IIA small chain homolog from Caenorhabditis elegans.